The primary structure comprises 889 residues: DNA mismatch repair protein MutS (889 aa).

ATP is bound at residue 641–648; that stretch reads GPNMAGKS.

The protein belongs to the DNA mismatch repair MutS family.

In terms of biological role, this protein is involved in the repair of mismatches in DNA. It is possible that it carries out the mismatch recognition step. This protein has a weak ATPase activity. The chain is DNA mismatch repair protein MutS from Orientia tsutsugamushi (strain Boryong) (Rickettsia tsutsugamushi).